Consider the following 435-residue polypeptide: Divergent protein kinase domain 2B (435 aa).

The first 33 residues, 1–33 (MESQWRGAAATAFHQHWLARLLLWVSTLSCSFS), serve as a signal peptide directing secretion. N-linked (GlcNAc...) asparagine glycans are attached at residues N102 and N395.

The protein belongs to the DIPK family.

It is found in the secreted. The chain is Divergent protein kinase domain 2B (Dipk2b) from Mus musculus (Mouse).